A 282-amino-acid polypeptide reads, in one-letter code: Bis(5'-nucleosyl)-tetraphosphatase, symmetrical (282 aa).

The protein belongs to the Ap4A hydrolase family.

It catalyses the reaction P(1),P(4)-bis(5'-adenosyl) tetraphosphate + H2O = 2 ADP + 2 H(+). In terms of biological role, hydrolyzes diadenosine 5',5'''-P1,P4-tetraphosphate to yield ADP. The chain is Bis(5'-nucleosyl)-tetraphosphatase, symmetrical from Escherichia coli O127:H6 (strain E2348/69 / EPEC).